We begin with the raw amino-acid sequence, 307 residues long: Secondary metabolism regulator LAE1 (307 aa).

The protein belongs to the methyltransferase superfamily. LaeA methyltransferase family. In terms of assembly, component of the heterotrimeric velvet complex composed of LAE1, VEL1 and VEL2; VEL1 acting as a bridging protein between LAE1 and VEL2.

It is found in the nucleus. It carries out the reaction L-methionyl-[protein] + S-adenosyl-L-methionine = S-methyl-L-methionyl-[protein] + S-adenosyl-L-homocysteine. Methyltransferase that performs automethylation. No other methyl-accepting substrate has been identified yet. Component of the velvet transcription factor complex that acts as a global regulator for secondary metabolite gene expression. Controls the expression of the T-toxin gene cluster. Promotes oxidative stress tolerance and acts as a virulence factors during infection. Negatively regulate mycelial pigmentation and controls sexual development, as well as asexual development during vegetative growth. This Cochliobolus heterostrophus (strain C5 / ATCC 48332 / race O) (Southern corn leaf blight fungus) protein is Secondary metabolism regulator LAE1.